The sequence spans 530 residues: Apolipoprotein N-acyltransferase (530 aa).

6 helical membrane-spanning segments follow: residues 19–39 (LIAG…PGLL), 65–85 (WLAG…AFLV), 96–116 (FAVT…ALLY), 128–148 (LTFA…LTGF), 169–189 (LVGA…PAVW), and 197–217 (AATG…AIAL). Positions 232 to 485 (VQADIKQDLK…SGVIDAQIPG (254 aa)) constitute a CN hydrolase domain. The active-site Proton acceptor is the Glu-274. Lys-343 is an active-site residue. Cys-396 functions as the Nucleophile in the catalytic mechanism.

Belongs to the CN hydrolase family. Apolipoprotein N-acyltransferase subfamily.

The protein resides in the cell inner membrane. The enzyme catalyses N-terminal S-1,2-diacyl-sn-glyceryl-L-cysteinyl-[lipoprotein] + a glycerophospholipid = N-acyl-S-1,2-diacyl-sn-glyceryl-L-cysteinyl-[lipoprotein] + a 2-acyl-sn-glycero-3-phospholipid + H(+). It functions in the pathway protein modification; lipoprotein biosynthesis (N-acyl transfer). Its function is as follows. Catalyzes the phospholipid dependent N-acylation of the N-terminal cysteine of apolipoprotein, the last step in lipoprotein maturation. The sequence is that of Apolipoprotein N-acyltransferase from Caulobacter vibrioides (strain ATCC 19089 / CIP 103742 / CB 15) (Caulobacter crescentus).